A 332-amino-acid chain; its full sequence is DNA-directed RNA polymerase subunit alpha (332 aa).

Positions 1-227 are alpha N-terminal domain (alpha-NTD); it reads MKKFAETPFL…VMYSQMSVFN (227 aa). The tract at residues 248–332 is alpha C-terminal domain (alpha-CTD); sequence KELVIRIDDL…LRRKLEQLKA (85 aa).

Belongs to the RNA polymerase alpha chain family. In terms of assembly, homodimer. The RNAP catalytic core consists of 2 alpha, 1 beta, 1 beta' and 1 omega subunit. When a sigma factor is associated with the core the holoenzyme is formed, which can initiate transcription.

The enzyme catalyses RNA(n) + a ribonucleoside 5'-triphosphate = RNA(n+1) + diphosphate. Its function is as follows. DNA-dependent RNA polymerase catalyzes the transcription of DNA into RNA using the four ribonucleoside triphosphates as substrates. The chain is DNA-directed RNA polymerase subunit alpha from Aliarcobacter butzleri (strain RM4018) (Arcobacter butzleri).